We begin with the raw amino-acid sequence, 223 residues long: 2-C-methyl-D-erythritol 4-phosphate cytidylyltransferase (223 aa).

The protein belongs to the IspD/TarI cytidylyltransferase family. IspD subfamily.

It catalyses the reaction 2-C-methyl-D-erythritol 4-phosphate + CTP + H(+) = 4-CDP-2-C-methyl-D-erythritol + diphosphate. The protein operates within isoprenoid biosynthesis; isopentenyl diphosphate biosynthesis via DXP pathway; isopentenyl diphosphate from 1-deoxy-D-xylulose 5-phosphate: step 2/6. Its function is as follows. Catalyzes the formation of 4-diphosphocytidyl-2-C-methyl-D-erythritol from CTP and 2-C-methyl-D-erythritol 4-phosphate (MEP). This chain is 2-C-methyl-D-erythritol 4-phosphate cytidylyltransferase, found in Prochlorococcus marinus subsp. pastoris (strain CCMP1986 / NIES-2087 / MED4).